The sequence spans 197 residues: Protein GrpE (197 aa).

The interval 1–41 is disordered; sequence MSSKEQKTPEGQAPEEIITEQHEEVEAVEPDASAEQVDPRD.

The protein belongs to the GrpE family. Homodimer.

Its subcellular location is the cytoplasm. In terms of biological role, participates actively in the response to hyperosmotic and heat shock by preventing the aggregation of stress-denatured proteins, in association with DnaK and GrpE. It is the nucleotide exchange factor for DnaK and may function as a thermosensor. Unfolded proteins bind initially to DnaJ; upon interaction with the DnaJ-bound protein, DnaK hydrolyzes its bound ATP, resulting in the formation of a stable complex. GrpE releases ADP from DnaK; ATP binding to DnaK triggers the release of the substrate protein, thus completing the reaction cycle. Several rounds of ATP-dependent interactions between DnaJ, DnaK and GrpE are required for fully efficient folding. The sequence is that of Protein GrpE from Enterobacter sp. (strain 638).